Consider the following 415-residue polypeptide: Elongation factor 1-gamma 1 (415 aa).

At Ser2 the chain carries N-acetylserine. The region spanning 2 to 78 (SQGTLYANFR…YLVKLSQDDK (77 aa)) is the GST N-terminal domain. Phosphothreonine is present on Thr32. The GST C-terminal domain occupies 89–215 (DLNAQAQIIR…KDFKFADKPL (127 aa)). Residues 212–256 (DKPLSPPQKKKEKKAPAAAPAASKKKEEAKPAATETETSSKKPKH) form a disordered region. The EF-1-gamma C-terminal domain occupies 254–415 (PKHPLELLGK…KEIVDGKVLK (162 aa)).

The eukaryotic elongation factor 1 complex (eEF1) is probably a heterohexamer. Two trimeric complexes, each composed of eEF1A (TEF1 or TEF2), eEF1Balpha (EFB1) and eEF1Bgamma (CAM1 or TEF4), are probably dimerized via the eF1Bgamma subunits. The eEF1B subcomplex with the GEF activity is formed of eEF1Balpha and eEF1Bgamma. CAM1 interacts with EFB1. Component of a complex bound to MXR1 promoter region.

The protein resides in the cytoplasm. The protein localises to the nucleus. The protein operates within protein biosynthesis; polypeptide chain elongation. In terms of biological role, subunit of the eukaryotic elongation factor 1 complex (eEF1). Probably plays a role in anchoring the complex to other cellular components. May be involved in transcriptional regulation of MXR1. In Saccharomyces cerevisiae (strain ATCC 204508 / S288c) (Baker's yeast), this protein is Elongation factor 1-gamma 1 (CAM1).